A 430-amino-acid polypeptide reads, in one-letter code: Gamma-glutamyl phosphate reductase (430 aa).

Belongs to the gamma-glutamyl phosphate reductase family.

Its subcellular location is the cytoplasm. The enzyme catalyses L-glutamate 5-semialdehyde + phosphate + NADP(+) = L-glutamyl 5-phosphate + NADPH + H(+). The protein operates within amino-acid biosynthesis; L-proline biosynthesis; L-glutamate 5-semialdehyde from L-glutamate: step 2/2. Catalyzes the NADPH-dependent reduction of L-glutamate 5-phosphate into L-glutamate 5-semialdehyde and phosphate. The product spontaneously undergoes cyclization to form 1-pyrroline-5-carboxylate. In Rhodopseudomonas palustris (strain TIE-1), this protein is Gamma-glutamyl phosphate reductase.